Consider the following 126-residue polypeptide: Aspartate 1-decarboxylase (126 aa).

Serine 25 acts as the Schiff-base intermediate with substrate; via pyruvic acid in catalysis. Residue serine 25 is modified to Pyruvic acid (Ser). Position 57 (threonine 57) interacts with substrate. The Proton donor role is filled by tyrosine 58. Residue 73–75 (GAA) coordinates substrate.

This sequence belongs to the PanD family. In terms of assembly, heterooctamer of four alpha and four beta subunits. Requires pyruvate as cofactor. Is synthesized initially as an inactive proenzyme, which is activated by self-cleavage at a specific serine bond to produce a beta-subunit with a hydroxyl group at its C-terminus and an alpha-subunit with a pyruvoyl group at its N-terminus.

Its subcellular location is the cytoplasm. It carries out the reaction L-aspartate + H(+) = beta-alanine + CO2. The protein operates within cofactor biosynthesis; (R)-pantothenate biosynthesis; beta-alanine from L-aspartate: step 1/1. Catalyzes the pyruvoyl-dependent decarboxylation of aspartate to produce beta-alanine. This Stutzerimonas stutzeri (strain A1501) (Pseudomonas stutzeri) protein is Aspartate 1-decarboxylase.